Here is a 244-residue protein sequence, read N- to C-terminus: MKIIISPAKTFKIRKLKKENIDCLFENKKNALVSIMKEKSIEELKSMWKCSDKIAEESYKLYKNFDVSPKGCAIRSFDGIQYQYMDVDSLDEDKLEYLEEHLRILSGLYGILRPFDQISKYRLDFEDKFINLYEFWEDEIRNHFEGEEIIDLASKEYGQNIYKYLDKAPVKIEFKEEVLIDGDIKLKTKATPSKILRGRMVNYMARNHIENIEQLKKFSCDGYNYSEKNSDKKKLVFVKSLVSE.

Belongs to the UPF0246 family.

This chain is UPF0246 protein FMG_1068, found in Finegoldia magna (strain ATCC 29328 / DSM 20472 / WAL 2508) (Peptostreptococcus magnus).